The primary structure comprises 232 residues: uncharacterized protein (232 aa).

This is an uncharacterized protein from Aedes vexans (Inland floodwater mosquito).